Consider the following 258-residue polypeptide: Acetylglutamate kinase (258 aa).

Residues 41-42, arginine 63, and asparagine 156 each bind substrate; that span reads GG.

The protein belongs to the acetylglutamate kinase family. ArgB subfamily.

The protein resides in the cytoplasm. It carries out the reaction N-acetyl-L-glutamate + ATP = N-acetyl-L-glutamyl 5-phosphate + ADP. It participates in amino-acid biosynthesis; L-arginine biosynthesis; N(2)-acetyl-L-ornithine from L-glutamate: step 2/4. In terms of biological role, catalyzes the ATP-dependent phosphorylation of N-acetyl-L-glutamate. This Bacillus velezensis (strain DSM 23117 / BGSC 10A6 / LMG 26770 / FZB42) (Bacillus amyloliquefaciens subsp. plantarum) protein is Acetylglutamate kinase.